A 478-amino-acid chain; its full sequence is MMKMKQQGLVADLLPNIRVMKTFGHFVFNYYNDNSSKYLHKVYCCVNLFMLLLQFGLCAVNLIVESADVDDLTANTITLLFFTHSIVKICYFAIRSKYFYRTWAIWNNPNSHPLFAESNARYHAIALKKMRLLLFLVGGTTMLAAVAWTVLTFFEHPIRKIVDPVTNETEIIELPQLLIRSFYPFDAGKGITHVLVLVYQFYWVLFMLIDANSLDVLFCSWLLFACEQLQHLKQIMKPLMELSATLDTVVPNSSELFKAGSADHLRDGDNPPPPPPPQSDNMLDLDLRNIYSNRQDFTATFRPTAGMTFNGGVGPNGLTKKQEALVRSAIKYWVERHKHIVRLVTAVGDAYGFALLLHMLTTTITLTLLAYQATKVNGINVYAASTIGYILYTFGQVFLFCIFGNRLIEESTSVMEAAYSCHWYDGSEEAKTFVQIVCQQCQKAMSISGAKFFTVSLDLFASVLGAVVTYFMVLVQLK.

At Met-1–Tyr-43 the chain is on the cytoplasmic side. Residues Cys-44–Val-64 traverse the membrane as a helical segment. The Extracellular portion of the chain corresponds to Glu-65 to Thr-73. The chain crosses the membrane as a helical span at residues Ala-74–Ile-94. The Cytoplasmic segment spans residues Arg-95–Leu-133. The chain crosses the membrane as a helical span at residues Leu-134–Phe-154. Residues Glu-155–Gly-190 lie on the Extracellular side of the membrane. A glycan (N-linked (GlcNAc...) asparagine) is linked at Asn-167. The helical transmembrane segment at Ile-191–Ala-211 threads the bilayer. Residues Asn-212–Asp-349 are Cytoplasmic-facing. The tract at residues Ser-261–Asn-281 is disordered. A helical transmembrane segment spans residues Ala-350–Ala-370. The Extracellular segment spans residues Tyr-371–Tyr-382. Residues Ala-383 to Phe-403 traverse the membrane as a helical segment. At Gly-404–Thr-454 the chain is on the cytoplasmic side. The chain crosses the membrane as a helical span at residues Val-455–Val-475. At Gln-476–Lys-478 the chain is on the extracellular side.

It belongs to the insect chemoreceptor superfamily. Heteromeric odorant receptor channel (TC 1.A.69) family. Orco subfamily. In terms of assembly, heterodimer with conventional odorant receptors (ORs). Present in antennae (at protein level).

Its subcellular location is the cell membrane. In terms of biological role, odorant coreceptor which complexes with conventional odorant receptors (ORs) to form odorant-sensing units, providing sensitive and prolonged odorant signaling and calcium permeability. Obligate coreceptor of all odorant receptors. Orco is a universal and integral part of the functional odorant receptor, involved in the dendritic localization of other olfactory receptors. Can form functional ion channels in the absence of an odor-binding odorant receptor. Plays a central role in the perception of olfactory stimuli in ants and is essential for ant social organization. Required for pheromone sensing. Also required for the development and maintenance of odorant receptor neurons (ORNs) and of antennal lobe glomeruli. The sequence is that of Odorant receptor coreceptor from Ooceraea biroi (Clonal raider ant).